The chain runs to 102 residues: Small ribosomal subunit protein uS10 (102 aa).

Belongs to the universal ribosomal protein uS10 family. In terms of assembly, part of the 30S ribosomal subunit.

Its function is as follows. Involved in the binding of tRNA to the ribosomes. This chain is Small ribosomal subunit protein uS10, found in Rhizobium etli (strain CIAT 652).